Here is a 488-residue protein sequence, read N- to C-terminus: R3H and coiled-coil domain-containing protein 1 (488 aa).

The region spanning 16–81 (NDFVHRVQEE…KRRTVICHLD (66 aa)) is the R3H domain. Disordered stretches follow at residues 87 to 180 (SDGP…GDAE) and 195 to 322 (KSPD…DADH). Positions 114–125 (GAAAGPRGAPAG) are enriched in low complexity. Phosphoserine is present on serine 232. Residues 244-321 (SHGMRSLVDQ…EEDEDEADAD (78 aa)) adopt a coiled-coil conformation. The span at 252-265 (DQEEEEIEGEEEEK) shows a compositional bias: acidic residues. Basic and acidic residues-rich tracts occupy residues 266-280 (VDEK…KERV) and 287-301 (TDAQ…GERM). A compositionally biased stretch (acidic residues) spans 302–319 (DEGEDKVDAEEEDEDEAD).

The chain is R3H and coiled-coil domain-containing protein 1 from Mus musculus (Mouse).